Consider the following 412-residue polypeptide: Lipid droplet organization protein LDO45 (412 aa).

At 1 to 170 (MAARNRRKNN…TVEKLNALQN (170 aa)) the chain is on the cytoplasmic side. Residues 171-191 (SLYEVFWIIFIYLNYWFPNVG) form a helical membrane-spanning segment. Over 192–247 (DYVSNTFGQQDSIIIRISLSKSHFRALREKSSQKVQQAVKNIYFCFQEKPYLTAFK) the chain is Lumenal. The helical transmembrane segment at 248–268 (VSFAIGLVIPCSLLFLIMVST) threads the bilayer. The Cytoplasmic portion of the chain corresponds to 269-271 (ATF). Residues 272–292 (FFFVYLTLFVVIGFFSSLFII) traverse the membrane as a helical segment. A topological domain (lumenal) is located at residue P293. The chain crosses the membrane as a helical span at residues 294–314 (LLGISFVFAIGVVSFGFCSNM). Over 315 to 412 (SFKMAQLIYV…NKAGNKFQLS (98 aa)) the chain is Cytoplasmic. The disordered stretch occupies residues 347-374 (QEPQEPLSTLRPVSNPTIPSPLRQTARP). Polar residues predominate over residues 357–373 (RPVSNPTIPSPLRQTAR).

As to quaternary structure, interacts specifically with the seipin complex FLD1-LDB16. Only a fraction appears to associate with the seipin core components, suggesting that it may be an ancillary subunit of the complex.

It localises to the endoplasmic reticulum membrane. It is found in the lipid droplet. Involved in lipid droplet (LD) organization. Modulates triglyceride (TAG) storage by reducing DGA1 LD localization. Promotes LD targeting of some proteins, including PDR16. This chain is Lipid droplet organization protein LDO45, found in Saccharomyces cerevisiae (strain ATCC 204508 / S288c) (Baker's yeast).